Reading from the N-terminus, the 389-residue chain is Na(+)/H(+) antiporter NhaA (389 aa).

Helical transmembrane passes span 14 to 34, 59 to 79, 95 to 115, 124 to 144, 154 to 174, 177 to 197, 213 to 233, 257 to 277, 292 to 312, 328 to 348, and 363 to 383; these read AGGI…NSPL, LILW…GLEV, SLPT…YLLF, AGWA…MALL, VFLL…IALF, TDLS…LVGL, LILW…GVII, PWST…VYVG, IALG…YIAV, IAPV…IASL, and LGTL…LSKV.

This sequence belongs to the NhaA Na(+)/H(+) (TC 2.A.33) antiporter family.

It is found in the cell inner membrane. The catalysed reaction is Na(+)(in) + 2 H(+)(out) = Na(+)(out) + 2 H(+)(in). Functionally, na(+)/H(+) antiporter that extrudes sodium in exchange for external protons. The protein is Na(+)/H(+) antiporter NhaA of Shewanella baltica (strain OS223).